The following is a 365-amino-acid chain: MSLNKVRASEYRRIFVNDHPIMDARAPVEFEKGAFPASVNHPLMEDEERKKVGTCYKERGQEAALKLGHSLVHGEIKQQRVDAWLDFFSKNPDGYLYCFRGGLRSQLTQQWLKEAGLDIPFIEGGYKAMRQFLIETIDDAPNMKPMLILSGITGSGKTDFLLKRKEAVDLEGLAHHRGSSFGRYHEPQPSQINFENALAVALLKHQDSAAKHLLLEDESYLIGRSALPQAFYTGMQAAGVLVLEESLDARLARLLNEYVHKMHSGYIQRLGEEAGFEAFAQYLAQSITGIKKRLGNKQHDEFQAIITNALNIQTSQNDTSAHLEWIELLLVKYYDPMYQYQIDKKADRVIFKGDHQAMHQWLDNH.

Residues 15-138 (FVNDHPIMDA…MRQFLIETID (124 aa)) form the Rhodanese domain. Cysteine 98 (S-selanylcysteine intermediate) is an active-site residue.

The protein belongs to the SelU family. As to quaternary structure, monomer.

It carries out the reaction 5-methylaminomethyl-2-thiouridine(34) in tRNA + selenophosphate + (2E)-geranyl diphosphate + H2O + H(+) = 5-methylaminomethyl-2-selenouridine(34) in tRNA + (2E)-thiogeraniol + phosphate + diphosphate. The enzyme catalyses 5-methylaminomethyl-2-thiouridine(34) in tRNA + (2E)-geranyl diphosphate = 5-methylaminomethyl-S-(2E)-geranyl-thiouridine(34) in tRNA + diphosphate. The catalysed reaction is 5-methylaminomethyl-S-(2E)-geranyl-thiouridine(34) in tRNA + selenophosphate + H(+) = 5-methylaminomethyl-2-(Se-phospho)selenouridine(34) in tRNA + (2E)-thiogeraniol. It catalyses the reaction 5-methylaminomethyl-2-(Se-phospho)selenouridine(34) in tRNA + H2O = 5-methylaminomethyl-2-selenouridine(34) in tRNA + phosphate. In terms of biological role, involved in the post-transcriptional modification of the uridine at the wobble position (U34) of tRNA(Lys), tRNA(Glu) and tRNA(Gln). Catalyzes the conversion of 2-thiouridine (S2U-RNA) to 2-selenouridine (Se2U-RNA). Acts in a two-step process involving geranylation of 2-thiouridine (S2U) to S-geranyl-2-thiouridine (geS2U) and subsequent selenation of the latter derivative to 2-selenouridine (Se2U) in the tRNA chain. The polypeptide is tRNA 2-selenouridine synthase (Shewanella halifaxensis (strain HAW-EB4)).